The sequence spans 266 residues: Ribosomal RNA small subunit methyltransferase A (266 aa).

S-adenosyl-L-methionine-binding residues include Asn-13, Leu-15, Gly-40, Glu-61, Asp-86, and Asn-110.

It belongs to the class I-like SAM-binding methyltransferase superfamily. rRNA adenine N(6)-methyltransferase family. RsmA subfamily.

The protein resides in the cytoplasm. It carries out the reaction adenosine(1518)/adenosine(1519) in 16S rRNA + 4 S-adenosyl-L-methionine = N(6)-dimethyladenosine(1518)/N(6)-dimethyladenosine(1519) in 16S rRNA + 4 S-adenosyl-L-homocysteine + 4 H(+). Its function is as follows. Specifically dimethylates two adjacent adenosines (A1518 and A1519) in the loop of a conserved hairpin near the 3'-end of 16S rRNA in the 30S particle. May play a critical role in biogenesis of 30S subunits. The protein is Ribosomal RNA small subunit methyltransferase A of Hydrogenovibrio crunogenus (strain DSM 25203 / XCL-2) (Thiomicrospira crunogena).